Reading from the N-terminus, the 392-residue chain is Phosphoglycerate kinase (392 aa).

Residues 21-23, R36, 59-62, R114, and R147 contribute to the substrate site; these read DLN and HLGR. Residues K198, E320, and 346 to 349 each bind ATP; that span reads GGDT.

This sequence belongs to the phosphoglycerate kinase family. Monomer.

The protein resides in the cytoplasm. It carries out the reaction (2R)-3-phosphoglycerate + ATP = (2R)-3-phospho-glyceroyl phosphate + ADP. It functions in the pathway carbohydrate degradation; glycolysis; pyruvate from D-glyceraldehyde 3-phosphate: step 2/5. This Nitrosomonas europaea (strain ATCC 19718 / CIP 103999 / KCTC 2705 / NBRC 14298) protein is Phosphoglycerate kinase.